The chain runs to 486 residues: N-succinylglutamate 5-semialdehyde dehydrogenase (486 aa).

Position 220–225 (220–225) interacts with NAD(+); the sequence is GSSRTG. Active-site residues include Glu243 and Cys277.

Belongs to the aldehyde dehydrogenase family. AstD subfamily.

The enzyme catalyses N-succinyl-L-glutamate 5-semialdehyde + NAD(+) + H2O = N-succinyl-L-glutamate + NADH + 2 H(+). It participates in amino-acid degradation; L-arginine degradation via AST pathway; L-glutamate and succinate from L-arginine: step 4/5. In terms of biological role, catalyzes the NAD-dependent reduction of succinylglutamate semialdehyde into succinylglutamate. This chain is N-succinylglutamate 5-semialdehyde dehydrogenase, found in Shewanella baltica (strain OS185).